The sequence spans 288 residues: Acetyl-coenzyme A carboxylase carboxyl transferase subunit beta (288 aa).

The CoA carboxyltransferase N-terminal domain maps to 32–288 (LFAKCPACKH…LELHTEVENV (257 aa)). 4 residues coordinate Zn(2+): cysteine 36, cysteine 39, cysteine 54, and cysteine 57. A C4-type zinc finger spans residues 36–57 (CPACKHTIYQKDLGKNKVCPNC).

Belongs to the AccD/PCCB family. As to quaternary structure, acetyl-CoA carboxylase is a heterohexamer composed of biotin carboxyl carrier protein (AccB), biotin carboxylase (AccC) and two subunits each of ACCase subunit alpha (AccA) and ACCase subunit beta (AccD). Zn(2+) is required as a cofactor.

Its subcellular location is the cytoplasm. It carries out the reaction N(6)-carboxybiotinyl-L-lysyl-[protein] + acetyl-CoA = N(6)-biotinyl-L-lysyl-[protein] + malonyl-CoA. It functions in the pathway lipid metabolism; malonyl-CoA biosynthesis; malonyl-CoA from acetyl-CoA: step 1/1. Functionally, component of the acetyl coenzyme A carboxylase (ACC) complex. Biotin carboxylase (BC) catalyzes the carboxylation of biotin on its carrier protein (BCCP) and then the CO(2) group is transferred by the transcarboxylase to acetyl-CoA to form malonyl-CoA. The chain is Acetyl-coenzyme A carboxylase carboxyl transferase subunit beta from Lactococcus lactis subsp. cremoris (strain SK11).